The following is a 288-amino-acid chain: Small ribosomal subunit protein uS9m (288 aa).

The interval 269–288 (VERKKPGKKKARKMPTWVKR) is disordered.

This sequence belongs to the universal ribosomal protein uS9 family.

It localises to the mitochondrion. The polypeptide is Small ribosomal subunit protein uS9m (MRPS9) (Candida glabrata (strain ATCC 2001 / BCRC 20586 / JCM 3761 / NBRC 0622 / NRRL Y-65 / CBS 138) (Yeast)).